The primary structure comprises 416 residues: Formyl-CoA:oxalate CoA-transferase (416 aa).

CoA is bound by residues 17–18 (QS), R38, 72–75 (LNTK), 96–98 (NFH), H104, and 137–140 (KAYE). D169 (nucleophile) is an active-site residue. 248 to 250 (GGQ) provides a ligand contact to substrate. 273-275 (QEQ) provides a ligand contact to CoA.

This sequence belongs to the CoA-transferase III family. Frc subfamily. In terms of assembly, homodimer.

It catalyses the reaction formyl-CoA + oxalate = oxalyl-CoA + formate. Its pathway is metabolic intermediate degradation; oxalate degradation; CO(2) and formate from oxalate: step 1/2. In terms of biological role, involved in the catabolism of oxalate and in the adapatation to low pH via the induction of the oxalate-dependent acid tolerance response (ATR). Catalyzes the transfer of the CoA moiety from formyl-CoA to oxalate. The polypeptide is Formyl-CoA:oxalate CoA-transferase (Escherichia coli O81 (strain ED1a)).